Here is a 354-residue protein sequence, read N- to C-terminus: Serum paraoxonase/arylesterase 2 (354 aa).

A disulfide bridge connects residues C42 and C352. Residues D53 and D54 each contribute to the Ca(2+) site. The Proton acceptor role is filled by H114. Positions 116, 167, 168, and 223 each coordinate Ca(2+). N-linked (GlcNAc...) asparagine glycosylation occurs at N254. D268 and N269 together coordinate Ca(2+). 2 N-linked (GlcNAc...) asparagine glycosylation sites follow: N269 and N323.

It belongs to the paraoxonase family. In terms of assembly, homotrimer. The cofactor is Ca(2+). In terms of processing, glycosylated. The signal sequence is not cleaved.

The protein localises to the membrane. The catalysed reaction is a phenyl acetate + H2O = a phenol + acetate + H(+). The enzyme catalyses an N-acyl-L-homoserine lactone + H2O = an N-acyl-L-homoserine + H(+). Functionally, capable of hydrolyzing lactones and a number of aromatic carboxylic acid esters. In Canis lupus familiaris (Dog), this protein is Serum paraoxonase/arylesterase 2 (PON2).